Here is a 191-residue protein sequence, read N- to C-terminus: Potassium-transporting ATPase KdpC subunit (191 aa).

Residues 11–31 (LFVLLTAVTGVVYPLAVTGIA) form a helical membrane-spanning segment.

The protein belongs to the KdpC family. The system is composed of three essential subunits: KdpA, KdpB and KdpC.

The protein localises to the cell inner membrane. Its function is as follows. Part of the high-affinity ATP-driven potassium transport (or Kdp) system, which catalyzes the hydrolysis of ATP coupled with the electrogenic transport of potassium into the cytoplasm. This subunit acts as a catalytic chaperone that increases the ATP-binding affinity of the ATP-hydrolyzing subunit KdpB by the formation of a transient KdpB/KdpC/ATP ternary complex. In Dechloromonas aromatica (strain RCB), this protein is Potassium-transporting ATPase KdpC subunit.